The following is a 254-amino-acid chain: Probable phosphatase Shew185_1467 (254 aa).

Residues H8, H10, H16, H41, E74, H102, H132, D193, and H195 each contribute to the Zn(2+) site.

It belongs to the PHP family. Zn(2+) serves as cofactor.

The chain is Probable phosphatase Shew185_1467 from Shewanella baltica (strain OS185).